We begin with the raw amino-acid sequence, 80 residues long: uncharacterized protein (80 aa).

The protein to M.leprae U650M.

This is an uncharacterized protein from Mycobacterium bovis (strain ATCC BAA-935 / AF2122/97).